We begin with the raw amino-acid sequence, 542 residues long: MAELTIDPTTIRKALDEFVESYKPSDTPTQEVGYVATAGDGIAHVTGLPGCMANELLTFEDGTLGLAFNLDAREIGVVILGDFTGIEEGQEVRRTGEVLSVPVGDGYLGRVVDPLGNPIDGLGEIKTEGRRILEAQAPDVMHRHPVDEPLSTGLKAIDAMTPIGRGQRQLIIGDRQTGKTAIAIDTIINQKRNWESGDPKKQVRCIYVAVGQKGSTIASVKQSLEEAGAMEYTTIVASPASDSAGFKYIAPYTGSAIGQHWMYNGKHVLIVFDDLSKQAEAYRSISLLLRRPPGREAYPGDVFYLHSRLLERCAKVSDDLGGGSMTGLPIVETKANDVSAYIPTNVISITDGQIFLQSDLFNANQRPAVDVGISVSRVGGAAQTKALKKVSGTLKISLAQYRSLESFAMFASDLDAASKAQLNRGAHLTELLKQPQFSPYSMEQEVVSVWAGTHGKMDDLPISDVLPFEKGMLDYLDHNTDILKTIRETEDFTADTEAALDKAVEAFRETFVTSAGKPLVEKKPDEKHTTPVEQEKIVAGEK.

173 to 180 provides a ligand contact to ATP; sequence GDRQTGKT. The segment at 518-542 is disordered; that stretch reads PLVEKKPDEKHTTPVEQEKIVAGEK. The segment covering 519–542 has biased composition (basic and acidic residues); sequence LVEKKPDEKHTTPVEQEKIVAGEK.

It belongs to the ATPase alpha/beta chains family. As to quaternary structure, F-type ATPases have 2 components, CF(1) - the catalytic core - and CF(0) - the membrane proton channel. CF(1) has five subunits: alpha(3), beta(3), gamma(1), delta(1), epsilon(1). CF(0) has three main subunits: a(1), b(2) and c(9-12). The alpha and beta chains form an alternating ring which encloses part of the gamma chain. CF(1) is attached to CF(0) by a central stalk formed by the gamma and epsilon chains, while a peripheral stalk is formed by the delta and b chains.

The protein resides in the cell membrane. The enzyme catalyses ATP + H2O + 4 H(+)(in) = ADP + phosphate + 5 H(+)(out). Its function is as follows. Produces ATP from ADP in the presence of a proton gradient across the membrane. The alpha chain is a regulatory subunit. This chain is ATP synthase subunit alpha, found in Bifidobacterium adolescentis (strain ATCC 15703 / DSM 20083 / NCTC 11814 / E194a).